The following is a 450-amino-acid chain: V-type proton ATPase subunit H (450 aa).

It belongs to the V-ATPase H subunit family. As to quaternary structure, V-ATPase is a heteromultimeric enzyme composed of a peripheral catalytic V1 complex (components A to H) attached to an integral membrane V0 proton pore complex (components: a, c, c', c'', d, e, f and VOA1).

It localises to the vacuole membrane. Functionally, subunit of the V1 complex of vacuolar(H+)-ATPase (V-ATPase), a multisubunit enzyme composed of a peripheral complex (V1) that hydrolyzes ATP and a membrane integral complex (V0) that translocates protons. V-ATPase is responsible for acidifying and maintaining the pH of intracellular compartments. This subunit is essential for activity, but not assembly, of the enzyme complex. This subunit is also required for silencing the ATPase activity of V-ATPase when V1 is detached from V0. This chain is V-type proton ATPase subunit H (vma13), found in Schizosaccharomyces pombe (strain 972 / ATCC 24843) (Fission yeast).